Here is a 345-residue protein sequence, read N- to C-terminus: Arginine N-succinyltransferase (345 aa).

Leu125 contacts succinyl-CoA. His229 functions as the Proton donor in the catalytic mechanism.

The protein belongs to the arginine N-succinyltransferase family.

The enzyme catalyses succinyl-CoA + L-arginine = N(2)-succinyl-L-arginine + CoA + H(+). It participates in amino-acid degradation; L-arginine degradation via AST pathway; L-glutamate and succinate from L-arginine: step 1/5. Its function is as follows. Catalyzes the transfer of succinyl-CoA to arginine to produce N(2)-succinylarginine. This is Arginine N-succinyltransferase from Yersinia enterocolitica serotype O:8 / biotype 1B (strain NCTC 13174 / 8081).